Consider the following 1344-residue polypeptide: Xanthine dehydrogenase (1344 aa).

One can recognise a 2Fe-2S ferredoxin-type domain in the interval 9-96 (SVLVFFVNGK…GCAVTTVEGI (88 aa)). [2Fe-2S] cluster is bound by residues cysteine 48, cysteine 53, cysteine 56, cysteine 78, cysteine 118, cysteine 121, cysteine 153, and cysteine 155. The 190-residue stretch at 236-425 (FSSERVTWYR…LGIHFQKTTP (190 aa)) folds into the FAD-binding PCMH-type domain. FAD contacts are provided by residues 264–271 (LVVGNTEV), phenylalanine 344, 354–358 (CLGGN), aspartate 367, leucine 415, and lysine 433. Glutamine 781 and phenylalanine 812 together coordinate Mo-molybdopterin. Residues glutamate 816 and arginine 894 each coordinate substrate. Arginine 926 is a Mo-molybdopterin binding site. Residue phenylalanine 928 coordinates substrate. Alanine 1093 lines the Mo-molybdopterin pocket. The Proton acceptor role is filled by glutamate 1276.

Belongs to the xanthine dehydrogenase family. As to quaternary structure, homodimer. The cofactor is FAD. Requires Mo-molybdopterin as cofactor. It depends on [2Fe-2S] cluster as a cofactor.

The protein resides in the peroxisome. It catalyses the reaction xanthine + NAD(+) + H2O = urate + NADH + H(+). The catalysed reaction is hypoxanthine + NAD(+) + H2O = xanthine + NADH + H(+). Key enzyme in purine degradation. Catalyzes the oxidation of hypoxanthine to xanthine. Catalyzes the oxidation of xanthine to uric acid. This chain is Xanthine dehydrogenase (Xdh), found in Drosophila subobscura (Fruit fly).